The following is a 253-amino-acid chain: Dihydroanticapsin 7-dehydrogenase (253 aa).

Residue 9 to 31 (LITGGASGIGYAAVQAFLNQQAN) participates in NAD(+) binding. S139 serves as a coordination point for substrate. Residue Y152 is the Proton acceptor of the active site.

It belongs to the short-chain dehydrogenases/reductases (SDR) family.

It catalyses the reaction L-dihydroanticapsin + NAD(+) = L-anticapsin + NADH + H(+). It functions in the pathway antibiotic biosynthesis; bacilysin biosynthesis. Functionally, part of the bacABCDEFG operon responsible for the biosynthesis of bacilysin, an irreversible inactivator of the glutaminase domain of glucosamine synthetase. Catalyzes the dehydrogenation of the C7-hydroxyl group in the 4S-tetrahydrotyrosine (4S-H4Tyr) to yield anticapsin (epoxycyclohexanonyl-Ala). The chain is Dihydroanticapsin 7-dehydrogenase from Bacillus subtilis.